Reading from the N-terminus, the 872-residue chain is Alanine--tRNA ligase (872 aa).

Zn(2+) is bound by residues histidine 567, histidine 571, cysteine 669, and histidine 673.

This sequence belongs to the class-II aminoacyl-tRNA synthetase family. It depends on Zn(2+) as a cofactor.

Its subcellular location is the cytoplasm. The catalysed reaction is tRNA(Ala) + L-alanine + ATP = L-alanyl-tRNA(Ala) + AMP + diphosphate. In terms of biological role, catalyzes the attachment of alanine to tRNA(Ala) in a two-step reaction: alanine is first activated by ATP to form Ala-AMP and then transferred to the acceptor end of tRNA(Ala). Also edits incorrectly charged Ser-tRNA(Ala) and Gly-tRNA(Ala) via its editing domain. The protein is Alanine--tRNA ligase of Streptococcus pyogenes serotype M18 (strain MGAS8232).